The chain runs to 100 residues: Urease subunit gamma (100 aa).

This sequence belongs to the urease gamma subunit family. As to quaternary structure, heterotrimer of UreA (gamma), UreB (beta) and UreC (alpha) subunits. Three heterotrimers associate to form the active enzyme.

It is found in the cytoplasm. It catalyses the reaction urea + 2 H2O + H(+) = hydrogencarbonate + 2 NH4(+). The protein operates within nitrogen metabolism; urea degradation; CO(2) and NH(3) from urea (urease route): step 1/1. The sequence is that of Urease subunit gamma from Yersinia aldovae.